A 272-amino-acid chain; its full sequence is UPF0759 protein YecE (272 aa).

This sequence belongs to the UPF0759 family.

This Escherichia coli O157:H7 protein is UPF0759 protein YecE (yecE).